We begin with the raw amino-acid sequence, 180 residues long: UPF0102 protein Tery_0733 (180 aa).

The protein belongs to the UPF0102 family.

The sequence is that of UPF0102 protein Tery_0733 from Trichodesmium erythraeum (strain IMS101).